The sequence spans 717 residues: DNA ligase (717 aa).

Residues 44–48 (DADYD), 93–94 (SL), and Glu127 contribute to the NAD(+) site. Lys129 serves as the catalytic N6-AMP-lysine intermediate. Residues Arg150, Glu186, Lys302, and Lys326 each coordinate NAD(+). Zn(2+) is bound by residues Cys431, Cys434, Cys455, and Cys461. The BRCT domain occupies 639-717 (STDSPVAGKT…EDEWLALIGG (79 aa)).

Belongs to the NAD-dependent DNA ligase family. LigA subfamily. Mg(2+) serves as cofactor. Mn(2+) is required as a cofactor.

It catalyses the reaction NAD(+) + (deoxyribonucleotide)n-3'-hydroxyl + 5'-phospho-(deoxyribonucleotide)m = (deoxyribonucleotide)n+m + AMP + beta-nicotinamide D-nucleotide.. Functionally, DNA ligase that catalyzes the formation of phosphodiester linkages between 5'-phosphoryl and 3'-hydroxyl groups in double-stranded DNA using NAD as a coenzyme and as the energy source for the reaction. It is essential for DNA replication and repair of damaged DNA. The polypeptide is DNA ligase (Sinorhizobium fredii (strain NBRC 101917 / NGR234)).